Here is a 191-residue protein sequence, read N- to C-terminus: dCTP deaminase (191 aa).

Residues Lys112 to Arg117, Thr136 to Glu138, Gln157, Tyr173, and Gln183 each bind dCTP. Glu138 functions as the Proton donor/acceptor in the catalytic mechanism.

The protein belongs to the dCTP deaminase family. As to quaternary structure, homotrimer.

The enzyme catalyses dCTP + H2O + H(+) = dUTP + NH4(+). The protein operates within pyrimidine metabolism; dUMP biosynthesis; dUMP from dCTP (dUTP route): step 1/2. Functionally, catalyzes the deamination of dCTP to dUTP. The polypeptide is dCTP deaminase (Psychrobacter sp. (strain PRwf-1)).